The sequence spans 374 residues: Flagellar P-ring protein (374 aa).

The signal sequence occupies residues 1-29 (MRRVRTTRLFQVACAAIVALASSAMSAHA).

The protein belongs to the FlgI family. In terms of assembly, the basal body constitutes a major portion of the flagellar organelle and consists of four rings (L,P,S, and M) mounted on a central rod.

It is found in the periplasm. Its subcellular location is the bacterial flagellum basal body. Its function is as follows. Assembles around the rod to form the L-ring and probably protects the motor/basal body from shearing forces during rotation. This chain is Flagellar P-ring protein, found in Bradyrhizobium sp. (strain BTAi1 / ATCC BAA-1182).